Here is a 110-residue protein sequence, read N- to C-terminus: Glutaredoxin-2 (110 aa).

In terms of domain architecture, Glutaredoxin spans 6–106; that stretch reads KAFVEKAISN…KMIAELKENK (101 aa). Cys26 and Cys29 form a disulfide bridge.

This sequence belongs to the glutaredoxin family.

In terms of biological role, the disulfide bond functions as an electron carrier in the glutathione-dependent synthesis of deoxyribonucleotides by the enzyme ribonucleotide reductase. In addition, it is also involved in reducing some disulfides in a coupled system with glutathione reductase. Thioltransferase catalyzes cellular thiol-disulfide transhydrogenation reactions. It transfers reducing equivalents to cytosolic protein and nonprotein disulfides. This is Glutaredoxin-2 (grx2) from Schizosaccharomyces pombe (strain 972 / ATCC 24843) (Fission yeast).